We begin with the raw amino-acid sequence, 357 residues long: Mitogen-activated protein kinase kinase SIPKK (357 aa).

The 261-residue stretch at Phe-70–Ile-330 folds into the Protein kinase domain. ATP-binding positions include Ile-76–Val-84 and Lys-99. The active-site Proton acceptor is the Asp-192.

The protein belongs to the protein kinase superfamily. STE Ser/Thr protein kinase family. MAP kinase kinase subfamily. As to quaternary structure, interacts with SIPK.

The catalysed reaction is L-tyrosyl-[protein] + ATP = O-phospho-L-tyrosyl-[protein] + ADP + H(+). It carries out the reaction L-seryl-[protein] + ATP = O-phospho-L-seryl-[protein] + ADP + H(+). It catalyses the reaction L-threonyl-[protein] + ATP = O-phospho-L-threonyl-[protein] + ADP + H(+). In terms of biological role, phosphorylates myelin basic protein (MBP) in vitro. May be involved in disease resistance. This Nicotiana tabacum (Common tobacco) protein is Mitogen-activated protein kinase kinase SIPKK.